The primary structure comprises 326 residues: GTPase IMAP family member 5 (326 aa).

Residues 1–297 (MEDHGFEELS…MLCRVTSCLD (297 aa)) lie on the Cytoplasmic side of the membrane. Residues 42–245 (SGLLRILLVG…HSNDLFVYTQ (204 aa)) form the AIG1-type G domain. GTP is bound by residues 51 to 59 (GKSGCGKSA), S72, 169 to 171 (HKE), and N206. Residues 298-318 (WHIAVSVLLIVLGLTLLITLI) traverse the membrane as a helical; Anchor for type IV membrane protein segment. Over 319-326 (NMYIGRWK) the chain is Lumenal.

Belongs to the TRAFAC class TrmE-Era-EngA-EngB-Septin-like GTPase superfamily. AIG1/Toc34/Toc159-like paraseptin GTPase family. IAN subfamily. Interacts with BAD, BAK1, BAX, BCL2, BCL2L1/Bcl-xL and BCL2L11/BimEL. The interaction with BAX is increased, when cells initiate apoptosis upon IL2 withdrawal. Forms a complex with BCL2L1 or MCL1 and HSPA8/HSC70; the interaction between HSPA8 and BCL2L1 or MCL1 is impaired in the absence of GIMAP5. May interact (via N-terminus) with microtubules. As to expression, primarily expressed in spleen, heart, lung and intestine and, at lower levels, in kidney, stomach and muscle. Expressed in thymus and lymph nodes (at protein level). In the spleen, expressed in periarteriolar lymphatic sheets. Isoform 2: Expressed at higher levels in T lymphocytes compared to isoform 1.

Its subcellular location is the lysosome membrane. It localises to the endosome. The protein resides in the multivesicular body membrane. The protein localises to the endosome membrane. Its function is as follows. Required for mitochondrial integrity and T-cell survival. May contribute to T-cell quiescence. In terms of biological role, plays a role in T lymphocyte development and the optimal generation of CD4/CD8 double-positive thymocytes. Inhibitor of GSK3A, possibly by sequestering GSK3A in cytoplasmic vesicles and impairing its translocation to the nucleus. Consequently, impairs GSK3A-dependent transcriptional program and regulation of the DNA damage response occurring during T cells proliferation. Required for the survival of peripheral T cells, natural killer (NK) and NK T-cell development and the maintenance of normal liver function. Promotes the survival of quiescent T-cells. May regulate Ca(2+) homeostasis by modulating lysosomal Ca(2+) stores, preventing its accumulation in the absence of T cell activation. May play a role in mitochondrial DNA segregation in hematopoietic tissues. Is a regulator of liver endothelial cell homeostasis. The protein is GTPase IMAP family member 5 (Gimap5) of Rattus norvegicus (Rat).